The following is a 2136-amino-acid chain: U5 small nuclear ribonucleoprotein 200 kDa helicase (2136 aa).

Phosphoserine is present on residues Ser17 and Ser26. Residue Lys46 forms a Glycyl lysine isopeptide (Lys-Gly) (interchain with G-Cter in SUMO2) linkage. Residues 50–80 (TRMGDKAQRTKPQMQEERRAKRRKRDEDRHD) are disordered. Residues 54–84 (DKAQRTKPQMQEERRAKRRKRDEDRHDINKM) adopt a coiled-coil conformation. Phosphoserine is present on Ser225. Residue Thr389 is modified to Phosphothreonine. Residues 395–2129 (DLDQGGEALA…YKFSVDVKEA (1735 aa)) are interaction with C9orf78 and WBP4. A Helicase ATP-binding 1 domain is found at 490–673 (RAALETDENL…FLRVDPAKGL (184 aa)). An ATP-binding site is contributed by 503 to 510 (APTGAGKT). The short motif at 615–618 (DEIH) is the DEIH box element. One can recognise a Helicase C-terminal 1 domain in the interval 684 to 921 (PLEQTYVGIT…NAKDAVNWLG (238 aa)). Phosphotyrosine is present on Tyr709. Lys971 carries the N6-acetyllysine modification. The 306-residue stretch at 981 to 1286 (VTELGRIASH…SCETQLPVSF (306 aa)) folds into the SEC63 1 domain. The segment at 1282–2136 (LPVSFRHLIL…KEAETDSDSD (855 aa)) is interaction with TSSC4. Residues 1337–1512 (NTVYNSDDNV…WLGCSATSTF (176 aa)) form the Helicase ATP-binding 2 domain. Residue 1350-1357 (APTGSGKT) coordinates ATP. Residue Thr1428 is modified to Phosphothreonine. Residues 1454–1457 (DEVH) carry the DEVH box motif. In terms of domain architecture, Helicase C-terminal 2 spans 1545–1753 (PVYHAITKHS…TIENKQDAVD (209 aa)). Residue Thr1765 is modified to Phosphothreonine. The SEC63 2 domain occupies 1812 to 2124 (PLNLGMIAAY…GCDQEYKFSV (313 aa)). A Phosphoserine modification is found at Ser2002. Thr2131 is subject to Phosphothreonine. Phosphoserine occurs at positions 2133 and 2135.

It belongs to the helicase family. SKI2 subfamily. Component of a core complex containing at least PRPF8, SNRNP200, EFTUD2 and SNRNP40. Component of the U5 snRNP and U4/U6-U5 tri-snRNP complexes, building blocks of the spliceosome. Component of the U4/U6-U5 tri-snRNP complex composed of the U4, U6 and U5 snRNAs and at least PRPF3, PRPF4, PRPF6, PRPF8, PRPF31, SNRNP200, TXNL4A, SNRNP40, DDX23, CD2BP2, PPIH, SNU13, EFTUD2, SART1 and USP39. Component of precatalytic, catalytic and postcatalytic spliceosomal complexes. Component of the minor spliceosome, which splices U12-type introns. Interacts with C9orf78; the interaction is direct and mutually exclusive with its interaction with WBP4. Interacts with WBP4; the interaction is mutually exclusive with its interaction with C9orf78. Interacts with PRPF8. Interacts with TSSC4; the interaction is direct, excludes recruitment of C9ORF78 and WBP4 to SNRNP200 and negatively regulates its RNA helicase activity. In terms of tissue distribution, widely expressed.

The protein localises to the nucleus. It catalyses the reaction ATP + H2O = ADP + phosphate + H(+). Functionally, catalyzes the ATP-dependent unwinding of U4/U6 RNA duplices, an essential step in the assembly of a catalytically active spliceosome. Plays a role in pre-mRNA splicing as a core component of precatalytic, catalytic and postcatalytic spliceosomal complexes. As a component of the minor spliceosome, involved in the splicing of U12-type introns in pre-mRNAs. Involved in spliceosome assembly, activation and disassembly. Mediates changes in the dynamic network of RNA-RNA interactions in the spliceosome. This is U5 small nuclear ribonucleoprotein 200 kDa helicase (SNRNP200) from Homo sapiens (Human).